The sequence spans 219 residues: Putative zinc metalloprotease YwhC (219 aa).

A helical transmembrane segment spans residues 4–24 (FLYYPLSLMPYLVITLIVSFT). Histidine 26 is a Zn(2+) binding site. Residue glutamate 27 is part of the active site. Histidine 30 provides a ligand contact to Zn(2+). 4 helical membrane passes run 52–72 (PIKH…FGWA), 94–114 (IAGP…LVLM), 132–152 (FFSI…LPLP), and 180–200 (FIVF…WPML).

The protein belongs to the peptidase M50B family. The cofactor is Zn(2+).

It is found in the cell membrane. In Bacillus subtilis (strain 168), this protein is Putative zinc metalloprotease YwhC (ywhC).